The following is a 314-amino-acid chain: Acetyl-coenzyme A carboxylase carboxyl transferase subunit alpha (314 aa).

The 258-residue stretch at 32 to 289 (EIDMLEASLK…KKMFLKHLNE (258 aa)) folds into the CoA carboxyltransferase C-terminal domain.

This sequence belongs to the AccA family. Acetyl-CoA carboxylase is a heterohexamer composed of biotin carboxyl carrier protein (AccB), biotin carboxylase (AccC) and two subunits each of ACCase subunit alpha (AccA) and ACCase subunit beta (AccD).

Its subcellular location is the cytoplasm. The enzyme catalyses N(6)-carboxybiotinyl-L-lysyl-[protein] + acetyl-CoA = N(6)-biotinyl-L-lysyl-[protein] + malonyl-CoA. It functions in the pathway lipid metabolism; malonyl-CoA biosynthesis; malonyl-CoA from acetyl-CoA: step 1/1. In terms of biological role, component of the acetyl coenzyme A carboxylase (ACC) complex. First, biotin carboxylase catalyzes the carboxylation of biotin on its carrier protein (BCCP) and then the CO(2) group is transferred by the carboxyltransferase to acetyl-CoA to form malonyl-CoA. The protein is Acetyl-coenzyme A carboxylase carboxyl transferase subunit alpha of Staphylococcus epidermidis (strain ATCC 12228 / FDA PCI 1200).